A 787-amino-acid polypeptide reads, in one-letter code: Putative pentatricopeptide repeat-containing protein At1g69350, mitochondrial (787 aa).

The transit peptide at 1-16 (MTQYMPLFRSCSSLRL) directs the protein to the mitochondrion. PPR repeat units lie at residues 33-63 (DPLPVTKLIESYAFMGSPDSSRLVFEAFPYP), 64-98 (DSFMYGVLIKCNVWCHLLDAAIDLYHRLVSETTQI), 99-134 (SKFVFPSVLRACAGSREHLSVGGKVHGRIIKGGVDD), 135-165 (DAVIETSLLCMYGQTGNLSDAEKVFDGMPVR), 166-200 (DLVAWSTLVSSCLENGEVVKALRMFKCMVDDGVEP), 201-235 (DAVTMISVVEGCAELGCLRIARSVHGQITRKMFDL), 236-266 (DETLCNSLLTMYSKCGDLLSSERIFEKIAKK), 267-301 (NAVSWTAMISSYNRGEFSEKALRSFSEMIKSGIEP), 302-336 (NLVTLYSVLSSCGLIGLIREGKSVHGFAVRRELDP), 338-368 (YESLSLALVELYAECGKLSDCETVLRVVSDR), 369-403 (NIVAWNSLISLYAHRGMVIQALGLFRQMVTQRIKP), 404-434 (DAFTLASSISACENAGLVPLGKQIHGHVIRT), 438-468 (DEFVQNSLIDMYSKSGSVDSASTVFNQIKHR), 469-503 (SVVTWNSMLCGFSQNGNSVEAISLFDYMYHSYLEM), 504-534 (NEVTFLAVIQACSSIGSLEKGKWVHHKLIIS), 538-568 (DLFTDTALIDMYAKCGDLNAAETVFRAMSSR), 569-603 (SIVSWSSMINAYGMHGRIGSAISTFNQMVESGTKP), 604-638 (NEVVFMNVLSACGHSGSVEEGKYYFNLMKSFGVSP), and 639-669 (NSEHFACFIDLLSRSGDLKEAYRTIKEMPFL). Positions 674–749 (VWGSLVNGCR…VPGYSAIEID (76 aa)) are type E motif. Positions 750-780 (QKVFRFGAGEENRIQTDEIYRFLGNLQNLTN) are type E(+) motif.

Belongs to the PPR family. PCMP-E subfamily.

It is found in the mitochondrion. The protein is Putative pentatricopeptide repeat-containing protein At1g69350, mitochondrial (PCMP-E66) of Arabidopsis thaliana (Mouse-ear cress).